The chain runs to 442 residues: Hydrolase phmG (442 aa).

Residue serine 259 is the Nucleophile of the active site.

This sequence belongs to the AB hydrolase superfamily. FUS2 hydrolase family. Homodimer.

Its pathway is mycotoxin biosynthesis. Its function is as follows. Hydrolyase; part of the gene cluster that mediates the biosynthesis of the mycotoxins phomacins, leucine-derived cytochalasans with potent actin polymerization-inhibitory activities and monocot-specific antigerminative activities. The first step in the pathway is catalyzed by the hybrid PKS-NRPS phmA, assisted by the enoyl reductase phmE, that are responsible for fusion of the leucine precursor and the polyketide backbone to produce a 2-pyrrolidone intermediate. The polyketide synthase module (PKS) of phmA is responsible for the synthesis of the polyketide backbone and the downstream nonribosomal peptide synthetase (NRPS) amidates the carboxyl end of the polyketide with the leucine precursor. Because phmA lacks a designated enoylreductase (ER) domain, the required activity is provided the enoyl reductase phmE. Reduction by the hydrolyase phmG, followed by dehydration and intra-molecular Diels-Alder cyclization by the Diels-Alderase phmD then yield the required isoindolone-fused macrocycle. A number of oxidative steps catalyzed by the tailoring cytochrome P450 monooxygenase phmB, the FAD-linked oxidoreductase phmC and the short-chain dehydrogenase/reductase phmF, are further required to afford the final products, phomacin D and phomacin E. The polypeptide is Hydrolase phmG (Phaeosphaeria nodorum (strain SN15 / ATCC MYA-4574 / FGSC 10173) (Glume blotch fungus)).